A 620-amino-acid polypeptide reads, in one-letter code: Probably inactive leucine-rich repeat receptor-like protein kinase At5g48380 (620 aa).

The signal sequence occupies residues 1–27 (MMMGRLVFVIWLYNCLCLLLLSSLVDA). Topologically, residues 28–228 (DQANIDCLRT…SASSSRGKVV (201 aa)) are extracellular. N-linked (GlcNAc...) asparagine glycans are attached at residues N56, N111, N119, and N147. LRR repeat units lie at residues 101-124 (DLTG…STLI), 126-148 (LVTI…ISNI), 150-172 (FLNT…LAQL), and 174-196 (RLKT…NQTL). N-linked (GlcNAc...) asparagine glycosylation occurs at N193. Residues 229 to 249 (IIAAVGGLTAAALVVGVVLFF) form a helical membrane-spanning segment. Over 250–620 (YFRKLGAVRK…DFIEELIVAR (371 aa)) the chain is Cytoplasmic. T300 is subject to Phosphothreonine. In terms of domain architecture, Protein kinase spans 303-596 (FKKDNIIATG…RAIGESYNFT (294 aa)). Residues 309 to 317 (IATGRTGTM) and K331 each bind ATP. A Phosphothreonine modification is found at T463. Position 479 is a phosphotyrosine (Y479). T482 bears the Phosphothreonine mark.

It belongs to the protein kinase superfamily. Ser/Thr protein kinase family.

The protein localises to the cell membrane. The polypeptide is Probably inactive leucine-rich repeat receptor-like protein kinase At5g48380 (Arabidopsis thaliana (Mouse-ear cress)).